The primary structure comprises 612 residues: DNA mismatch repair protein MutL (612 aa).

The protein belongs to the DNA mismatch repair MutL/HexB family.

In terms of biological role, this protein is involved in the repair of mismatches in DNA. It is required for dam-dependent methyl-directed DNA mismatch repair. May act as a 'molecular matchmaker', a protein that promotes the formation of a stable complex between two or more DNA-binding proteins in an ATP-dependent manner without itself being part of a final effector complex. In Afipia carboxidovorans (strain ATCC 49405 / DSM 1227 / KCTC 32145 / OM5) (Oligotropha carboxidovorans), this protein is DNA mismatch repair protein MutL.